A 110-amino-acid polypeptide reads, in one-letter code: Protein YcgL (110 aa).

A YcgL domain is found at 14-98 (MFCVIYRSSK…PPEDLLKQHL (85 aa)). The disordered stretch occupies residues 88 to 110 (PPPEDLLKQHLSSVGQNTSHADR). A compositionally biased stretch (polar residues) spans 97 to 110 (HLSSVGQNTSHADR).

The chain is Protein YcgL from Salmonella schwarzengrund (strain CVM19633).